The primary structure comprises 370 residues: Actin-related protein 2/3 complex subunit 1A (370 aa).

WD repeat units lie at residues 6 to 45 (FLLE…WTKA), 50 to 89 (EHNG…WKPT), 140 to 179 (PIRS…VDEK), 202 to 241 (GTGG…QVST), 244 to 284 (TEFL…TFVS), and 322 to 365 (LHQN…SSIQ).

Belongs to the WD repeat ARPC1 family. As to quaternary structure, probable component of the Arp2/3 complex in which it may replace ARPC1B.

The protein resides in the cytoplasm. It localises to the cytoskeleton. Its subcellular location is the nucleus. Its function is as follows. Probably functions as a component of the Arp2/3 complex which is involved in regulation of actin polymerization and together with an activating nucleation-promoting factor (NPF) mediates the formation of branched actin networks. In addition to its role in the cytoplasmic cytoskeleton, the Arp2/3 complex also promotes actin polymerization in the nucleus, thereby regulating gene transcription and repair of damaged DNA. The sequence is that of Actin-related protein 2/3 complex subunit 1A (Arpc1a) from Mus musculus (Mouse).